Reading from the N-terminus, the 110-residue chain is NADH-quinone oxidoreductase subunit K (110 aa).

3 helical membrane-spanning segments follow: residues 13–33, 41–61, and 73–93; these read LNHY…GLFM, ILMS…AFSI, and IIIL…LLIY.

It belongs to the complex I subunit 4L family. NDH-1 is composed of 14 different subunits. Subunits NuoA, H, J, K, L, M, N constitute the membrane sector of the complex.

It is found in the cell inner membrane. The enzyme catalyses a quinone + NADH + 5 H(+)(in) = a quinol + NAD(+) + 4 H(+)(out). In terms of biological role, NDH-1 shuttles electrons from NADH, via FMN and iron-sulfur (Fe-S) centers, to quinones in the respiratory chain. The immediate electron acceptor for the enzyme in this species is believed to be ubiquinone. Couples the redox reaction to proton translocation (for every two electrons transferred, four hydrogen ions are translocated across the cytoplasmic membrane), and thus conserves the redox energy in a proton gradient. In Rickettsia conorii (strain ATCC VR-613 / Malish 7), this protein is NADH-quinone oxidoreductase subunit K.